The primary structure comprises 195 residues: ATP-dependent Clp protease proteolytic subunit (195 aa).

Ser98 acts as the Nucleophile in catalysis. His123 is an active-site residue.

Belongs to the peptidase S14 family. As to quaternary structure, fourteen ClpP subunits assemble into 2 heptameric rings which stack back to back to give a disk-like structure with a central cavity, resembling the structure of eukaryotic proteasomes.

The protein resides in the cytoplasm. The catalysed reaction is Hydrolysis of proteins to small peptides in the presence of ATP and magnesium. alpha-casein is the usual test substrate. In the absence of ATP, only oligopeptides shorter than five residues are hydrolyzed (such as succinyl-Leu-Tyr-|-NHMec, and Leu-Tyr-Leu-|-Tyr-Trp, in which cleavage of the -Tyr-|-Leu- and -Tyr-|-Trp bonds also occurs).. In terms of biological role, cleaves peptides in various proteins in a process that requires ATP hydrolysis. Has a chymotrypsin-like activity. Plays a major role in the degradation of misfolded proteins. The polypeptide is ATP-dependent Clp protease proteolytic subunit (Thermoanaerobacter pseudethanolicus (strain ATCC 33223 / 39E) (Clostridium thermohydrosulfuricum)).